The following is a 291-amino-acid chain: METGRIIKLISGVYQVDVDGTLYDTKPRGLFRKKKFSPIVGDIVDFEIQNTSEGYIHHVHERHNELKRPPVSNIDGLIIVMSAVEPDFSTQLLDRFLVIAHSYDLEPSILVTKKDLASENEIEQINAWLKIYEEIGYNTQFVGKHTSQQEVVATWPKGLIVLSGQSGVGKSTFINAFKPELNLETNHISKSLNRGKHTTRHVELFERESGFIADTPGFSALDFGHIDKDELKHYFIEMNRFGEECKFRNCNHIKEPKCHVKQQLENGYLAQFRYDHYIQLYNEISNRKVRY.

Positions 63-221 (HNELKRPPVS…IADTPGFSAL (159 aa)) constitute a CP-type G domain. Residues 112-115 (TKKD) and 164-172 (GQSGVGKST) contribute to the GTP site. Zn(2+)-binding residues include C245, C250, H252, and C258.

Belongs to the TRAFAC class YlqF/YawG GTPase family. RsgA subfamily. Monomer. Associates with 30S ribosomal subunit, binds 16S rRNA. Requires Zn(2+) as cofactor.

The protein localises to the cytoplasm. One of several proteins that assist in the late maturation steps of the functional core of the 30S ribosomal subunit. Helps release RbfA from mature subunits. May play a role in the assembly of ribosomal proteins into the subunit. Circularly permuted GTPase that catalyzes slow GTP hydrolysis, GTPase activity is stimulated by the 30S ribosomal subunit. The polypeptide is Small ribosomal subunit biogenesis GTPase RsgA (Staphylococcus haemolyticus (strain JCSC1435)).